Consider the following 189-residue polypeptide: Peptidyl-tRNA hydrolase (189 aa).

Y14 provides a ligand contact to tRNA. The Proton acceptor role is filled by H19. 3 residues coordinate tRNA: F64, N66, and N112.

Belongs to the PTH family. Monomer.

The protein resides in the cytoplasm. It catalyses the reaction an N-acyl-L-alpha-aminoacyl-tRNA + H2O = an N-acyl-L-amino acid + a tRNA + H(+). In terms of biological role, hydrolyzes ribosome-free peptidyl-tRNAs (with 1 or more amino acids incorporated), which drop off the ribosome during protein synthesis, or as a result of ribosome stalling. Functionally, catalyzes the release of premature peptidyl moieties from peptidyl-tRNA molecules trapped in stalled 50S ribosomal subunits, and thus maintains levels of free tRNAs and 50S ribosomes. The sequence is that of Peptidyl-tRNA hydrolase from Rhizorhabdus wittichii (strain DSM 6014 / CCUG 31198 / JCM 15750 / NBRC 105917 / EY 4224 / RW1) (Sphingomonas wittichii).